A 239-amino-acid polypeptide reads, in one-letter code: Dolichyldiphosphatase (239 aa).

Residues 1–34 (MNSTAAAINPNPNVIPFDDTYILYDSHDFLSFLS) are Lumenal-facing. The helical transmembrane segment at 35 to 55 (AYFSLMPILVLAFYLSWFIIT) threads the bilayer. At 56–131 (RELEACIVAF…KIYTSWKNLN (76 aa)) the chain is on the cytoplasmic side. Residues 132 to 152 (FLEKCIFSGALALLSFCVCFS) form a helical membrane-spanning segment. At 153-164 (RVYLHYHNLDQV) the chain is on the lumenal side. A helical membrane pass occupies residues 165–185 (IVGFSVGALTGSLYFFIVGII). Over 186 to 239 (RELGLINWFLKLRIVRLFYMTDSYNLAPLTLKENYEAYWKRINQRSFNDKSKRD) the chain is Cytoplasmic.

Belongs to the dolichyldiphosphatase family.

It is found in the endoplasmic reticulum membrane. It catalyses the reaction a di-trans,poly-cis-dolichyl diphosphate + H2O = a di-trans,poly-cis-dolichyl phosphate + phosphate + H(+). It functions in the pathway protein modification; protein glycosylation. In terms of biological role, non-essential protein which is required for efficient N-glycosylation. Necessary for maintaining optimal levels of dolichol-linked oligosaccharides. Hydrolyzes dolichyl pyrophosphate at a very high rate and dolichyl monophosphate at a much lower rate. Does not act on phosphatidate. The polypeptide is Dolichyldiphosphatase (CAX4) (Saccharomyces cerevisiae (strain ATCC 204508 / S288c) (Baker's yeast)).